The primary structure comprises 434 residues: MNPDEVNRALGHYLNDADSGELVVEDSTTVQVKNPEARKTGDKIEVFYSRKTTVVSPTNSDDEDADFCSDSELLPQQEGHRSRATSFAGRIRAGSDDEAMPKHTILRYRRKKGGQWREINLQGTPDKRKDDEDELEVDVKEDRSEQTGIVTKTYEARWKVLKYEHLPEWLQDNEFLRHGHRPPLPSFSECFKSIWSLHTETGNIWTHLIGCVAFFFLACWFLTRPDNHIQFQEKVVFSFFFAGAVLCLGLSFAFHTLSCHSVNVVKIFCKLDYMGISLLIIGSFIPWIYYGFYCRREPKITYIAMVSVLGIGAIVVSLWDKFSESRFRPIRAAVFVGMGCSGVIPTIHYIITDGVHSLFADNSFHWLLLMAFLYLLGAGLYATRTPERFFPGKCDIWFQSHQLFHTCVVIAAFVHYYGISEMAFARLNEQCPVR.

Over 1–201 (MNPDEVNRAL…KSIWSLHTET (201 aa)) the chain is Cytoplasmic. 2 disordered regions span residues 74–103 (LPQQEGHRSRATSFAGRIRAGSDDEAMPKH) and 118–137 (EINLQGTPDKRKDDEDELEV). A helical membrane pass occupies residues 202 to 222 (GNIWTHLIGCVAFFFLACWFL). The Extracellular portion of the chain corresponds to 223-234 (TRPDNHIQFQEK). A helical transmembrane segment spans residues 235–255 (VVFSFFFAGAVLCLGLSFAFH). At 256–273 (TLSCHSVNVVKIFCKLDY) the chain is on the cytoplasmic side. The chain crosses the membrane as a helical span at residues 274-294 (MGISLLIIGSFIPWIYYGFYC). Over 295–299 (RREPK) the chain is Extracellular. Residues 300–320 (ITYIAMVSVLGIGAIVVSLWD) form a helical membrane-spanning segment. Residues 321 to 331 (KFSESRFRPIR) are Cytoplasmic-facing. The chain crosses the membrane as a helical span at residues 332–352 (AAVFVGMGCSGVIPTIHYIIT). The Extracellular segment spans residues 353 to 362 (DGVHSLFADN). The chain crosses the membrane as a helical span at residues 363 to 383 (SFHWLLLMAFLYLLGAGLYAT). Over 384–403 (RTPERFFPGKCDIWFQSHQL) the chain is Cytoplasmic. A helical membrane pass occupies residues 404–424 (FHTCVVIAAFVHYYGISEMAF). The Extracellular portion of the chain corresponds to 425 to 434 (ARLNEQCPVR).

Belongs to the ADIPOR family.

It localises to the membrane. Functionally, probable receptor, which may be involved in metabolic pathways that regulate lipid metabolism such as fatty acid oxidation. The protein is Progestin and adipoQ receptor-like protein 1 (paqr-1) of Caenorhabditis elegans.